The primary structure comprises 131 residues: Glycine cleavage system H protein (131 aa).

The region spanning valine 24–lysine 106 is the Lipoyl-binding domain. Lysine 65 carries the N6-lipoyllysine modification.

This sequence belongs to the GcvH family. As to quaternary structure, the glycine cleavage system is composed of four proteins: P, T, L and H. Requires (R)-lipoate as cofactor.

The glycine cleavage system catalyzes the degradation of glycine. The H protein shuttles the methylamine group of glycine from the P protein to the T protein. The protein is Glycine cleavage system H protein of Sodalis glossinidius (strain morsitans).